Reading from the N-terminus, the 414-residue chain is uncharacterized protein (414 aa).

The interval 204-230 (LVGTPAPGPNGSNSDGDSERASQDVRD) is disordered. Residues 220-230 (DSERASQDVRD) show a composition bias toward basic and acidic residues.

It belongs to the CdaR family.

This is an uncharacterized protein from Mycobacterium tuberculosis (strain CDC 1551 / Oshkosh).